The primary structure comprises 268 residues: Homeobox protein Hox-D12 (268 aa).

The segment at 102–124 is disordered; it reads TPDAPTASEERSRTRPPFAPESS. The segment at residues 200-259 is a DNA-binding region (homeobox); it reads ARKKRKPYTKQQIAELENEFLVNEFINRQKRKELSNRLNLSDQQVKIWFQNRRMKKKRVV.

Belongs to the Abd-B homeobox family.

It localises to the nucleus. Sequence-specific transcription factor which is part of a developmental regulatory system that provides cells with specific positional identities on the anterior-posterior axis. In Mus musculus (Mouse), this protein is Homeobox protein Hox-D12 (Hoxd12).